The sequence spans 23 residues: MRNAVSKAGIISRRRLLLFQFAG.

In Escherichia coli (strain K12), this protein is Protein YsaE.